The primary structure comprises 553 residues: Coiled-coil domain-containing protein 22 homolog (553 aa).

Residues 236–264 (DSEEPAPPPISTVKPDASAEEEASPIQEL) are disordered. Coiled-coil stretches lie at residues 261-286 (IQEL…KAHA), 314-407 (ERTS…QSLA), and 498-549 (NVTK…VEQP).

The protein belongs to the CCDC22 family.

This Drosophila erecta (Fruit fly) protein is Coiled-coil domain-containing protein 22 homolog.